The chain runs to 25 residues: Ocellatin-K1 (25 aa).

At Ile-25 the chain carries Isoleucine amide.

Expressed by the skin glands.

It is found in the secreted. Functionally, has hemolytic and antibacterial activity. This is Ocellatin-K1 from Leptodactylus knudseni (Knudsen's thin-toed frog).